A 27-amino-acid polypeptide reads, in one-letter code: Conotoxin flf14a (27 aa).

2 disulfides stabilise this stretch: C6–C26 and C10–C22.

As to expression, expressed by the venom duct.

Its subcellular location is the secreted. The chain is Conotoxin flf14a from Conus anabathrum floridanus (Florida cone).